A 179-amino-acid chain; its full sequence is MASFLSPVPVLAAGGIADINPGLTLWTAITFLVMLVVLGKFAWGPIVKMLAERERSIREAIDSAKKERAEAERLLAAQKESLAKAQREAAELARRNQQEVEALRQELTAKARKEADELVAEARRQIAEELGKAKTELKAQVVDLAIDAASRLVKANLDEKAQRALVEEYIAQLPANRAA.

Residues 27–47 traverse the membrane as a helical segment; sequence TAITFLVMLVVLGKFAWGPIV.

It belongs to the ATPase B chain family. F-type ATPases have 2 components, F(1) - the catalytic core - and F(0) - the membrane proton channel. F(1) has five subunits: alpha(3), beta(3), gamma(1), delta(1), epsilon(1). F(0) has three main subunits: a(1), b(2) and c(10-14). The alpha and beta chains form an alternating ring which encloses part of the gamma chain. F(1) is attached to F(0) by a central stalk formed by the gamma and epsilon chains, while a peripheral stalk is formed by the delta and b chains.

Its subcellular location is the cell inner membrane. In terms of biological role, f(1)F(0) ATP synthase produces ATP from ADP in the presence of a proton or sodium gradient. F-type ATPases consist of two structural domains, F(1) containing the extramembraneous catalytic core and F(0) containing the membrane proton channel, linked together by a central stalk and a peripheral stalk. During catalysis, ATP synthesis in the catalytic domain of F(1) is coupled via a rotary mechanism of the central stalk subunits to proton translocation. Functionally, component of the F(0) channel, it forms part of the peripheral stalk, linking F(1) to F(0). The sequence is that of ATP synthase subunit b from Anaeromyxobacter sp. (strain K).